A 326-amino-acid chain; its full sequence is 4-hydroxy-3-methylbut-2-enyl diphosphate reductase (326 aa).

Position 22 (C22) interacts with [4Fe-4S] cluster. (2E)-4-hydroxy-3-methylbut-2-enyl diphosphate is bound by residues H51 and H84. 2 residues coordinate dimethylallyl diphosphate: H51 and H84. Positions 51 and 84 each coordinate isopentenyl diphosphate. C106 contacts [4Fe-4S] cluster. H134 lines the (2E)-4-hydroxy-3-methylbut-2-enyl diphosphate pocket. Position 134 (H134) interacts with dimethylallyl diphosphate. An isopentenyl diphosphate-binding site is contributed by H134. Catalysis depends on E136, which acts as the Proton donor. T174 is a binding site for (2E)-4-hydroxy-3-methylbut-2-enyl diphosphate. C204 is a [4Fe-4S] cluster binding site. (2E)-4-hydroxy-3-methylbut-2-enyl diphosphate contacts are provided by S232, S233, N234, and S276. Dimethylallyl diphosphate is bound by residues S232, S233, N234, and S276. Isopentenyl diphosphate is bound by residues S232, S233, N234, and S276.

The protein belongs to the IspH family. [4Fe-4S] cluster is required as a cofactor.

The enzyme catalyses isopentenyl diphosphate + 2 oxidized [2Fe-2S]-[ferredoxin] + H2O = (2E)-4-hydroxy-3-methylbut-2-enyl diphosphate + 2 reduced [2Fe-2S]-[ferredoxin] + 2 H(+). It carries out the reaction dimethylallyl diphosphate + 2 oxidized [2Fe-2S]-[ferredoxin] + H2O = (2E)-4-hydroxy-3-methylbut-2-enyl diphosphate + 2 reduced [2Fe-2S]-[ferredoxin] + 2 H(+). It participates in isoprenoid biosynthesis; dimethylallyl diphosphate biosynthesis; dimethylallyl diphosphate from (2E)-4-hydroxy-3-methylbutenyl diphosphate: step 1/1. Its pathway is isoprenoid biosynthesis; isopentenyl diphosphate biosynthesis via DXP pathway; isopentenyl diphosphate from 1-deoxy-D-xylulose 5-phosphate: step 6/6. In terms of biological role, catalyzes the conversion of 1-hydroxy-2-methyl-2-(E)-butenyl 4-diphosphate (HMBPP) into a mixture of isopentenyl diphosphate (IPP) and dimethylallyl diphosphate (DMAPP). Acts in the terminal step of the DOXP/MEP pathway for isoprenoid precursor biosynthesis. The sequence is that of 4-hydroxy-3-methylbut-2-enyl diphosphate reductase from Bordetella bronchiseptica (strain ATCC BAA-588 / NCTC 13252 / RB50) (Alcaligenes bronchisepticus).